We begin with the raw amino-acid sequence, 280 residues long: Purine nucleoside phosphorylase (280 aa).

Phosphate is bound by residues Ser15 and 55–56 (RH). Position 194 (Met194) interacts with substrate. Thr195 is a binding site for phosphate. Residue 218-220 (DLD) coordinates substrate.

It belongs to the PNP/MTAP phosphorylase family. MTAP subfamily. In terms of assembly, homohexamer. Dimer of a homotrimer.

It catalyses the reaction a purine D-ribonucleoside + phosphate = a purine nucleobase + alpha-D-ribose 1-phosphate. The protein operates within purine metabolism; purine nucleoside salvage. In terms of biological role, purine nucleoside phosphorylase involved in purine salvage. The polypeptide is Purine nucleoside phosphorylase (Streptomyces coelicolor (strain ATCC BAA-471 / A3(2) / M145)).